Consider the following 208-residue polypeptide: Large ribosomal subunit protein eL13 (208 aa).

2 positions are modified to phosphoserine: Ser177 and Ser180.

This sequence belongs to the eukaryotic ribosomal protein eL13 family. In terms of assembly, component of the large ribosomal subunit (LSU). Mature yeast ribosomes consist of a small (40S) and a large (60S) subunit. The 40S small subunit contains 1 molecule of ribosomal RNA (18S rRNA) and at least 33 different proteins. The large 60S subunit contains 3 rRNA molecules (25S, 5.8S and 5S rRNA) and at least 46 different proteins.

It localises to the cytoplasm. Component of the ribosome, a large ribonucleoprotein complex responsible for the synthesis of proteins in the cell. The small ribosomal subunit (SSU) binds messenger RNAs (mRNAs) and translates the encoded message by selecting cognate aminoacyl-transfer RNA (tRNA) molecules. The large subunit (LSU) contains the ribosomal catalytic site termed the peptidyl transferase center (PTC), which catalyzes the formation of peptide bonds, thereby polymerizing the amino acids delivered by tRNAs into a polypeptide chain. The nascent polypeptides leave the ribosome through a tunnel in the LSU and interact with protein factors that function in enzymatic processing, targeting, and the membrane insertion of nascent chains at the exit of the ribosomal tunnel. The protein is Large ribosomal subunit protein eL13 (rpl13) of Schizosaccharomyces pombe (strain 972 / ATCC 24843) (Fission yeast).